A 156-amino-acid polypeptide reads, in one-letter code: Non-structural protein 2 (156 aa).

Belongs to the pneumovirus non-structural protein 2 family.

Its subcellular location is the host cytoplasm. Its function is as follows. Plays a major role in antagonizing the type I IFN-mediated antiviral response. May also inhibit viral transcription and RNA replication. The polypeptide is Non-structural protein 2 (1B) (Mus musculus (Mouse)).